Here is a 330-residue protein sequence, read N- to C-terminus: Carbonic anhydrase (330 aa).

A chloroplast transit peptide-like region spans residues 1–109 (MSTASAFATN…AAARIDQITA (109 aa)).

Belongs to the beta-class carbonic anhydrase family.

The protein resides in the cytoplasm. It carries out the reaction hydrogencarbonate + H(+) = CO2 + H2O. Its function is as follows. Reversible hydration of carbon dioxide. The protein is Carbonic anhydrase of Flaveria brownii (Brown's yellowtops).